A 450-amino-acid chain; its full sequence is Tubulin beta-6 chain (450 aa).

The GTP site is built by glutamine 11, glutamate 71, serine 140, glycine 144, threonine 145, glycine 146, asparagine 206, and asparagine 228. Glutamate 71 is a Mg(2+) binding site. The tract at residues 429-450 (DATVEDEEEYEGEEGLDENYET) is disordered. Over residues 431–450 (TVEDEEEYEGEEGLDENYET) the composition is skewed to acidic residues.

This sequence belongs to the tubulin family. As to quaternary structure, dimer of alpha and beta chains. A typical microtubule is a hollow water-filled tube with an outer diameter of 25 nm and an inner diameter of 15 nM. Alpha-beta heterodimers associate head-to-tail to form protofilaments running lengthwise along the microtubule wall with the beta-tubulin subunit facing the microtubule plus end conferring a structural polarity. Microtubules usually have 13 protofilaments but different protofilament numbers can be found in some organisms and specialized cells. Mg(2+) serves as cofactor.

Its subcellular location is the cytoplasm. It localises to the cytoskeleton. In terms of biological role, tubulin is the major constituent of microtubules, a cylinder consisting of laterally associated linear protofilaments composed of alpha- and beta-tubulin heterodimers. Microtubules grow by the addition of GTP-tubulin dimers to the microtubule end, where a stabilizing cap forms. Below the cap, tubulin dimers are in GDP-bound state, owing to GTPase activity of alpha-tubulin. In Gossypium hirsutum (Upland cotton), this protein is Tubulin beta-6 chain.